A 1241-amino-acid chain; its full sequence is eIF-2-alpha kinase GCN2 (1241 aa).

Residues 1 to 15 (MGRSSSKKKKKRGGS) are compositionally biased toward basic residues. The interval 1–33 (MGRSSSKKKKKRGGSGRRGQLKDHGSNADEDNE) is disordered. The RWD domain occupies 37 to 148 (EEITALSAIF…EAAQEFLSEI (112 aa)). Residues 253 to 321 (PIAKLNTVQE…SLGSWSSDSL (69 aa)) are disordered. 2 stretches are compositionally biased toward low complexity: residues 267 to 276 (DTSISSFDSS) and 307 to 321 (NSES…SDSL). In terms of domain architecture, Protein kinase spans 425–731 (FEELKPLGQG…ATELLKHAFP (307 aa)). ATP-binding positions include 431–439 (LGQGGFGHV) and Lys454. Asp586 functions as the Proton acceptor in the catalytic mechanism. Positions 819–1219 (IPMRLLSDCP…ELKKEKVVGR (401 aa)) are histidyl-tRNA synthetase-like.

Belongs to the protein kinase superfamily. Ser/Thr protein kinase family. GCN2 subfamily. In terms of assembly, homodimer; homodimerization is important for kinase activation by uncharged tRNAs. As to expression, expressed in roots, leaves, stems, buds, flowers, siliques and seedlings.

The protein localises to the cytoplasm. The enzyme catalyses L-seryl-[protein] + ATP = O-phospho-L-seryl-[protein] + ADP + H(+). It carries out the reaction L-threonyl-[protein] + ATP = O-phospho-L-threonyl-[protein] + ADP + H(+). Its activity is regulated as follows. The kinase activity is stimulated upon binding to uncharged tRNAs. Metabolic-stress sensing protein kinase that phosphorylates the alpha subunit of eukaryotic translation initiation factor 2 eIF-2-alpha in response to low amino acid availability. Plays a role as an activator of the general amino acid control pathway required for adapatation to amino acid starvation. Converts phosphorylated eIF-2-alpha either to a competitive inhibitor of translation initiation, leading to a global protein synthesis repression, and thus to a reduced overall utilization of amino acids, or to a translational initiation activation of specific mRNAs, and hence allowing reprogramming of amino acid biosynthetic gene expression to alleviate nutrient depletion. Binds uncharged tRNAs. This chain is eIF-2-alpha kinase GCN2, found in Arabidopsis thaliana (Mouse-ear cress).